The chain runs to 417 residues: Serine hydroxymethyltransferase 1 (417 aa).

(6S)-5,6,7,8-tetrahydrofolate contacts are provided by residues leucine 121 and 125–127 (GHL). An N6-(pyridoxal phosphate)lysine modification is found at lysine 230. A (6S)-5,6,7,8-tetrahydrofolate-binding site is contributed by 355–357 (SPF).

The protein belongs to the SHMT family. Homodimer. It depends on pyridoxal 5'-phosphate as a cofactor.

Its subcellular location is the cytoplasm. The catalysed reaction is (6R)-5,10-methylene-5,6,7,8-tetrahydrofolate + glycine + H2O = (6S)-5,6,7,8-tetrahydrofolate + L-serine. It participates in one-carbon metabolism; tetrahydrofolate interconversion. Its pathway is amino-acid biosynthesis; glycine biosynthesis; glycine from L-serine: step 1/1. Its function is as follows. Catalyzes the reversible interconversion of serine and glycine with tetrahydrofolate (THF) serving as the one-carbon carrier. This reaction serves as the major source of one-carbon groups required for the biosynthesis of purines, thymidylate, methionine, and other important biomolecules. Also exhibits THF-independent aldolase activity toward beta-hydroxyamino acids, producing glycine and aldehydes, via a retro-aldol mechanism. This chain is Serine hydroxymethyltransferase 1, found in Pseudomonas aeruginosa (strain ATCC 15692 / DSM 22644 / CIP 104116 / JCM 14847 / LMG 12228 / 1C / PRS 101 / PAO1).